The chain runs to 633 residues: Chaperone protein DnaK (633 aa).

Threonine 198 carries the post-translational modification Phosphothreonine; by autocatalysis.

Belongs to the heat shock protein 70 family.

Acts as a chaperone. In Rhodopseudomonas palustris (strain HaA2), this protein is Chaperone protein DnaK.